Here is a 403-residue protein sequence, read N- to C-terminus: S-adenosylmethionine synthase (403 aa).

His-17 contributes to the ATP binding site. Residue Asp-19 coordinates Mg(2+). Glu-45 contributes to the K(+) binding site. L-methionine-binding residues include Glu-58 and Gln-104. Positions 104–114 (QSPDIAQGVDT) are flexible loop. Residues 179–181 (DGK), 250–251 (KF), Asp-259, 265–266 (RK), Ala-282, and Lys-286 each bind ATP. Asp-259 is an L-methionine binding site. Residue Lys-290 coordinates L-methionine.

The protein belongs to the AdoMet synthase family. In terms of assembly, homotetramer; dimer of dimers. Requires Mg(2+) as cofactor. K(+) is required as a cofactor.

It localises to the cytoplasm. The enzyme catalyses L-methionine + ATP + H2O = S-adenosyl-L-methionine + phosphate + diphosphate. It functions in the pathway amino-acid biosynthesis; S-adenosyl-L-methionine biosynthesis; S-adenosyl-L-methionine from L-methionine: step 1/1. Functionally, catalyzes the formation of S-adenosylmethionine (AdoMet) from methionine and ATP. The overall synthetic reaction is composed of two sequential steps, AdoMet formation and the subsequent tripolyphosphate hydrolysis which occurs prior to release of AdoMet from the enzyme. The protein is S-adenosylmethionine synthase of Mycobacterium bovis (strain BCG / Pasteur 1173P2).